The sequence spans 130 residues: MAAQKRKTTKRRVRKNIPSGIAHIHTTFNNTIVTITDPAGNAISWSSAGALGIKGSRKSTPFAAQLTSEAAAKGAMDNGMARVEVYVKGPGPGREAAIRSLQAAGLEITAIKDVTPVPHNGCRPPKRPRN.

Belongs to the universal ribosomal protein uS11 family. Part of the 30S ribosomal subunit. Interacts with proteins S7 and S18. Binds to IF-3.

Functionally, located on the platform of the 30S subunit, it bridges several disparate RNA helices of the 16S rRNA. Forms part of the Shine-Dalgarno cleft in the 70S ribosome. This is Small ribosomal subunit protein uS11 from Acholeplasma laidlawii (strain PG-8A).